A 211-amino-acid chain; its full sequence is Probable nicotinate-nucleotide adenylyltransferase (211 aa).

This sequence belongs to the NadD family.

The enzyme catalyses nicotinate beta-D-ribonucleotide + ATP + H(+) = deamido-NAD(+) + diphosphate. It participates in cofactor biosynthesis; NAD(+) biosynthesis; deamido-NAD(+) from nicotinate D-ribonucleotide: step 1/1. In terms of biological role, catalyzes the reversible adenylation of nicotinate mononucleotide (NaMN) to nicotinic acid adenine dinucleotide (NaAD). The sequence is that of Probable nicotinate-nucleotide adenylyltransferase from Thermoanaerobacter sp. (strain X514).